We begin with the raw amino-acid sequence, 274 residues long: Energy-coupling factor transporter ATP-binding protein EcfA1 (274 aa).

The 232-residue stretch at A10–D241 folds into the ABC transporter domain. An ATP-binding site is contributed by G42–S49.

The protein belongs to the ABC transporter superfamily. Energy-coupling factor EcfA family. Forms a stable energy-coupling factor (ECF) transporter complex composed of 2 membrane-embedded substrate-binding proteins (S component), 2 ATP-binding proteins (A component) and 2 transmembrane proteins (T component).

The protein resides in the cell membrane. Functionally, ATP-binding (A) component of a common energy-coupling factor (ECF) ABC-transporter complex. Unlike classic ABC transporters this ECF transporter provides the energy necessary to transport a number of different substrates. In Mycoplasma pneumoniae (strain ATCC 29342 / M129 / Subtype 1) (Mycoplasmoides pneumoniae), this protein is Energy-coupling factor transporter ATP-binding protein EcfA1.